Reading from the N-terminus, the 198-residue chain is Probable opine utilization operon repressor (198 aa).

The protein operates within opine metabolism; mannopine biosynthesis [regulation]. Functionally, possible repressor for genes for mannityl-opine utilization and / or plasmid conjugative transfer. This is Probable opine utilization operon repressor (opnR) from Rhizobium rhizogenes (Agrobacterium rhizogenes).